A 673-amino-acid chain; its full sequence is DNA ligase (673 aa).

NAD(+)-binding positions include 36–40 (DAEYD), 85–86 (SL), and glutamate 116. The active-site N6-AMP-lysine intermediate is lysine 118. Arginine 139, glutamate 176, lysine 291, and lysine 315 together coordinate NAD(+). Residues cysteine 409, cysteine 412, cysteine 427, and cysteine 433 each contribute to the Zn(2+) site. In terms of domain architecture, BRCT spans 592-673 (RGEQPLAGRT…LQALLQEHGR (82 aa)).

The protein belongs to the NAD-dependent DNA ligase family. LigA subfamily. Mg(2+) is required as a cofactor. Requires Mn(2+) as cofactor.

The catalysed reaction is NAD(+) + (deoxyribonucleotide)n-3'-hydroxyl + 5'-phospho-(deoxyribonucleotide)m = (deoxyribonucleotide)n+m + AMP + beta-nicotinamide D-nucleotide.. DNA ligase that catalyzes the formation of phosphodiester linkages between 5'-phosphoryl and 3'-hydroxyl groups in double-stranded DNA using NAD as a coenzyme and as the energy source for the reaction. It is essential for DNA replication and repair of damaged DNA. The chain is DNA ligase from Alkalilimnicola ehrlichii (strain ATCC BAA-1101 / DSM 17681 / MLHE-1).